Here is a 203-residue protein sequence, read N- to C-terminus: Putative 3-methyladenine DNA glycosylase (203 aa).

The protein belongs to the DNA glycosylase MPG family.

This Clostridium tetani (strain Massachusetts / E88) protein is Putative 3-methyladenine DNA glycosylase.